The following is a 1073-amino-acid chain: Self-sufficient cytochrome P450 monooxygenase CYP505AG1 (1073 aa).

Heme is bound at residue C409. Residues 501–644 form the Flavodoxin-like domain; sequence VTILYGSNSG…DLENWEDEHL (144 aa). FMN contacts are provided by residues 507 to 511 and 588 to 620; these read SNSGT and VFAC…HRVA. An FAD-binding FR-type domain is found at 680 to 909; that stretch reads HNAVECIVSE…RPCKKQFHLP (230 aa).

This sequence in the N-terminal section; belongs to the cytochrome P450 family. FAD serves as cofactor. Requires FMN as cofactor. Heme is required as a cofactor.

It carries out the reaction 2 oxidized [cytochrome P450] + NADPH = 2 reduced [cytochrome P450] + NADP(+) + H(+). The catalysed reaction is an organic molecule + reduced [NADPH--hemoprotein reductase] + O2 = an alcohol + oxidized [NADPH--hemoprotein reductase] + H2O + H(+). The enzyme catalyses dodecanoate + reduced [NADPH--hemoprotein reductase] + O2 = 10-hydroxydodecanoate + oxidized [NADPH--hemoprotein reductase] + H2O + H(+). It catalyses the reaction tetradecanoate + reduced [NADPH--hemoprotein reductase] + O2 = 12-hydroxytetradecanoate + oxidized [NADPH--hemoprotein reductase] + H2O + H(+). Its function is as follows. Self-sufficient cytochrome P450 monooxygenase that catalyzes the regioselective in-chain hydroxylation of alkanes, fatty alcohols, and fatty acids, giving sub-terminal hydroxylation by acting preferentially on the omega-2 position. Prefers fatty acids as substrates, since it hydroxylates the small amounts of dodecanoic acid formed in the presence of an excess of 1-dodecanol. The protein is Self-sufficient cytochrome P450 monooxygenase CYP505AG1 of Oidiodendron maius (strain Zn).